The sequence spans 511 residues: BAR/IMD domain-containing adapter protein 2-like 1 (511 aa).

The IMD domain maps to 1 to 249 (MSRGPEEVNR…MNMIEEIKTP (249 aa)). A coiled-coil region spans residues 115 to 154 (MNATLKRYQTEHKNKLESLEKSQAELKKIRRKSQGSRNAL). 2 positions are modified to phosphothreonine: threonine 248 and threonine 257. 2 positions are modified to phosphoserine: serine 261 and serine 281. Positions 302-328 (NNPATAAPNSQRVNNSTGTSEDPSLQR) are disordered. Residues 303 to 328 (NPATAAPNSQRVNNSTGTSEDPSLQR) are compositionally biased toward polar residues. Residues serine 331 and serine 354 each carry the phosphoserine modification. One can recognise an SH3 domain in the interval 339-402 (MKKQKVKTIF…PSSYTKLLEE (64 aa)). The residue at position 412 (threonine 412) is a Phosphothreonine. Phosphoserine is present on residues serine 414, serine 420, and serine 422. Residues 451–511 (RRADSARTTS…TNDRSAPIIR (61 aa)) are disordered. Positions 483 to 511 (PPFLSGENPFATVKLRPTVTNDRSAPIIR) are binds F-actin.

As to quaternary structure, interacts with RAC1. Binds to F-actin. Interacts with FASLG. Interacts (via SH3 domain) with E.coli effector protein EspF(U) (via PXXP motifs). Identified in a complex containing at least WASL, BAIAP2L1 and E.coli EspF(U). Interacts with E.coli intimin receptor Tir. Post-translationally, phosphorylated on tyrosine in response to insulin.

The protein resides in the cytoplasm. Its subcellular location is the cytoskeleton. Its function is as follows. May function as adapter protein. Involved in the formation of clusters of actin bundles. Plays a role in the reorganization of the actin cytoskeleton in response to bacterial infection. This chain is BAR/IMD domain-containing adapter protein 2-like 1 (BAIAP2L1), found in Homo sapiens (Human).